A 21-amino-acid chain; its full sequence is Pedibin (21 aa).

The disordered stretch occupies residues 1-21 (AGEDVSHELEEKEKALANHSE).

Functionally, morphogenetically active peptide. Active in foot development. This Hydra vulgaris (Hydra) protein is Pedibin.